The following is a 141-amino-acid chain: Large ribosomal subunit protein uL16 (141 aa).

This sequence belongs to the universal ribosomal protein uL16 family. As to quaternary structure, part of the 50S ribosomal subunit.

Binds 23S rRNA and is also seen to make contacts with the A and possibly P site tRNAs. In Kosmotoga olearia (strain ATCC BAA-1733 / DSM 21960 / TBF 19.5.1), this protein is Large ribosomal subunit protein uL16.